The primary structure comprises 89 residues: MQQEADVNVFQQDLADMKGEHKALEQRVSALERVSDRQDQQIMTLNEKLNKIEENTTWIKRTITGAIITAVSTGIIGGAIAIMYSLLQH.

The chain crosses the membrane as a helical span at residues 63–83 (ITGAIITAVSTGIIGGAIAIM).

It to B.licheniformis xpaF1 and xpaL1.

It is found in the cell membrane. In terms of biological role, associated with cell lysis upon induction of PbsX. The polypeptide is Protein XhlA (xhlA) (Bacillus subtilis (strain 168)).